A 118-amino-acid polypeptide reads, in one-letter code: MNFTALLAAVAAALVGSANATACTATQQTAAYKTLVSILSDASFNQCSTDSGYSMLTAKALPTTAQYKLMCASTACNTMIKKIVTLNPPNCDLTVPTSGLVLNVYSYANGFSNKCSSL.

The N-terminal stretch at 1 to 20 (MNFTALLAAVAAALVGSANA) is a signal peptide. 3 cysteine pairs are disulfide-bonded: cysteine 23/cysteine 91, cysteine 47/cysteine 76, and cysteine 71/cysteine 115.

Belongs to the elicitin family.

The protein resides in the secreted. Functionally, induces local and distal defense responses (incompatible hypersensitive reaction) in plants from the solanaceae and cruciferae families. Elicits leaf necrosis and causes the accumulation of pathogenesis-related proteins. Might interact with the lipidic molecules of the plasma membrane. The protein is Beta-elicitin cryptogein of Phytophthora cryptogea.